A 144-amino-acid chain; its full sequence is Small ribosomal subunit protein uS19 (144 aa).

The protein belongs to the universal ribosomal protein uS19 family.

In Dictyostelium discoideum (Social amoeba), this protein is Small ribosomal subunit protein uS19 (rps15).